Here is a 39-residue protein sequence, read N- to C-terminus: Basic phospholipase A2 (39 aa).

Residues Tyr-27, Gly-29, and Gly-31 each coordinate Ca(2+).

It belongs to the phospholipase A2 family. Group II subfamily. D49 sub-subfamily. Ca(2+) is required as a cofactor. In terms of tissue distribution, expressed by the venom gland.

The protein localises to the secreted. It catalyses the reaction a 1,2-diacyl-sn-glycero-3-phosphocholine + H2O = a 1-acyl-sn-glycero-3-phosphocholine + a fatty acid + H(+). Is selectively inhibited by the gamma-phospholipase A2 inhibitor (PLI) CgMIP-I (AC P0DQP7) but not by the alpha-PLI CgMIP-II (AC P0DQP8). Its function is as follows. Snake venom phospholipase A2 (PLA2) that shows high myotoxic activities, induces mild edema, and shows cytolytic, and anti-coagulant activities, as well as intracerebral lethal effect. Does not induce lethality at a dose of 5 ug/g, when intravenously injected into mice. PLA2 catalyzes the calcium-dependent hydrolysis of the 2-acyl groups in 3-sn-phosphoglycerides. The polypeptide is Basic phospholipase A2 (Cerrophidion godmani (Porthidium godmani)).